Reading from the N-terminus, the 590-residue chain is Protein I'm not dead yet (590 aa).

The next 11 membrane-spanning stretches (helical) occupy residues 43–63, 82–102, 115–135, 153–173, 224–244, 270–290, 329–349, 373–393, 457–477, 509–529, and 540–560; these read GLVVFLVPLLCLPVMLLNEGA, ALPLYVTSMIPIVAFPIMGIM, TLVMFMGGIMVALAVEYCNLH, LHFGLIMVTMFLSMWISNAAC, LCYYLGIAYASSLGGCGTIIG, TFMFYSVPSMLVYTLLTFVFL, LGPMSIHEIQVMILFIFMVVM, SMPTIFVVVMCFMLPANYAFL, VLPNSVLLLVVILVAVFLTAF, AGLACSMAFHLPVSTPPNALV, and MAIAGIGPTIITIITLFVFCQ.

Belongs to the SLC13A/DASS transporter (TC 2.A.47) family. NADC subfamily. In terms of tissue distribution, in adults, abundantly expressed in the fat body, basolateral region of midgut cells and oenocytes. Low level expression is seen in the halteres, procardia, restricted regions of the esophagus and hindgut, base of the legs and in a subset of cells in the third segment of the antennae.

It is found in the basolateral cell membrane. In terms of biological role, cation-independent electroneutral transporter (not associated with membrane depolarization) of a variety of tricarboxylic and dicarboxylic acid-cycle intermediates. There is also small, but detectable, transport of monocarboxylics. Transport is through the epithelium of the gut and across the plasma membranes of organs involved in intermediary metabolism and storage. Affinity for substrates is citrate &gt; succinate &gt; pyruvate. Fumarate, a-ketoglutarate, and glutarate are also transported, but not lactate. Transport mechanism that is not coupled to Na(+), K(+), or Cl(-). Function is shown in Xenopus oocytes and human retinal pigment epithelial (HRPE) cell lines. The chain is Protein I'm not dead yet (Indy) from Drosophila melanogaster (Fruit fly).